The chain runs to 216 residues: Protein-L-isoaspartate O-methyltransferase (216 aa).

S61 is an active-site residue.

Belongs to the methyltransferase superfamily. L-isoaspartyl/D-aspartyl protein methyltransferase family.

The protein resides in the cytoplasm. The catalysed reaction is [protein]-L-isoaspartate + S-adenosyl-L-methionine = [protein]-L-isoaspartate alpha-methyl ester + S-adenosyl-L-homocysteine. Functionally, catalyzes the methyl esterification of L-isoaspartyl residues in peptides and proteins that result from spontaneous decomposition of normal L-aspartyl and L-asparaginyl residues. It plays a role in the repair and/or degradation of damaged proteins. In Geobacter metallireducens (strain ATCC 53774 / DSM 7210 / GS-15), this protein is Protein-L-isoaspartate O-methyltransferase.